The sequence spans 123 residues: UPF0102 protein MCA0184 (123 aa).

The protein belongs to the UPF0102 family.

The sequence is that of UPF0102 protein MCA0184 from Methylococcus capsulatus (strain ATCC 33009 / NCIMB 11132 / Bath).